Consider the following 127-residue polypeptide: Large ribosomal subunit protein uL22 (127 aa).

It belongs to the universal ribosomal protein uL22 family. In terms of assembly, part of the 50S ribosomal subunit.

Its function is as follows. This protein binds specifically to 23S rRNA; its binding is stimulated by other ribosomal proteins, e.g. L4, L17, and L20. It is important during the early stages of 50S assembly. It makes multiple contacts with different domains of the 23S rRNA in the assembled 50S subunit and ribosome. Functionally, the globular domain of the protein is located near the polypeptide exit tunnel on the outside of the subunit, while an extended beta-hairpin is found that lines the wall of the exit tunnel in the center of the 70S ribosome. The polypeptide is Large ribosomal subunit protein uL22 (Methylorubrum populi (strain ATCC BAA-705 / NCIMB 13946 / BJ001) (Methylobacterium populi)).